Here is a 219-residue protein sequence, read N- to C-terminus: Mediator of RNA polymerase II transcription subunit 20b (219 aa).

It belongs to the Mediator complex subunit 20 family. Component of the Mediator complex.

Its subcellular location is the nucleus. Its function is as follows. Component of the Mediator complex, a coactivator involved in the regulated transcription of nearly all RNA polymerase II-dependent genes. Mediator functions as a bridge to convey information from gene-specific regulatory proteins to the basal RNA polymerase II transcription machinery. The Mediator complex, having a compact conformation in its free form, is recruited to promoters by direct interactions with regulatory proteins and serves for the assembly of a functional preinitiation complex with RNA polymerase II and the general transcription factors. The protein is Mediator of RNA polymerase II transcription subunit 20b (MED20B) of Arabidopsis thaliana (Mouse-ear cress).